Reading from the N-terminus, the 426-residue chain is Gamma-glutamyl phosphate reductase (426 aa).

The protein belongs to the gamma-glutamyl phosphate reductase family.

It is found in the cytoplasm. It carries out the reaction L-glutamate 5-semialdehyde + phosphate + NADP(+) = L-glutamyl 5-phosphate + NADPH + H(+). It participates in amino-acid biosynthesis; L-proline biosynthesis; L-glutamate 5-semialdehyde from L-glutamate: step 2/2. In terms of biological role, catalyzes the NADPH-dependent reduction of L-glutamate 5-phosphate into L-glutamate 5-semialdehyde and phosphate. The product spontaneously undergoes cyclization to form 1-pyrroline-5-carboxylate. This chain is Gamma-glutamyl phosphate reductase, found in Delftia acidovorans (strain DSM 14801 / SPH-1).